The primary structure comprises 295 residues: Acetylglutamate kinase (295 aa).

Residues 64-65 (GG), Arg-86, and Asn-190 contribute to the substrate site.

It belongs to the acetylglutamate kinase family. ArgB subfamily.

The protein localises to the cytoplasm. It catalyses the reaction N-acetyl-L-glutamate + ATP = N-acetyl-L-glutamyl 5-phosphate + ADP. Its pathway is amino-acid biosynthesis; L-arginine biosynthesis; N(2)-acetyl-L-ornithine from L-glutamate: step 2/4. In terms of biological role, catalyzes the ATP-dependent phosphorylation of N-acetyl-L-glutamate. This is Acetylglutamate kinase from Oleidesulfovibrio alaskensis (strain ATCC BAA-1058 / DSM 17464 / G20) (Desulfovibrio alaskensis).